Here is a 553-residue protein sequence, read N- to C-terminus: Putative transport protein AHA_3492 (553 aa).

5 helical membrane-spanning segments follow: residues 4-24 (IALSISMLSLVAVLGLWLGNW), 29-49 (VGLGIGGVLFGGIIVGHFAGL), 65-85 (FGLILFVYTIGIQVGPGFFSS), 95-115 (GFAALLVLLGCAVAAALHQLF), and 158-178 (MGYAVAYPFGICGILLTMWLI). 2 RCK C-terminal domains span residues 191 to 276 (AQFE…VLGE) and 279 to 361 (ETSL…VVGN). The next 6 membrane-spanning stretches (helical) occupy residues 371 to 391 (MLPVFIGIGLGVLLGSIPFYL), 403 to 425 (AGGPLVVALILSRIGSIGKLYWF), 439 to 459 (IVLFLAVVGFKSGAGFIDTLI), 465 to 485 (AWMMYGVAITLIPLLVVGVLA), 493 to 513 (YLTLCGLLAGSMTDPPALAFA), and 533 to 553 (LVMFLRIISPQLLAILLWAGA).

This sequence belongs to the AAE transporter (TC 2.A.81) family. YidE subfamily.

It localises to the cell membrane. This is Putative transport protein AHA_3492 from Aeromonas hydrophila subsp. hydrophila (strain ATCC 7966 / DSM 30187 / BCRC 13018 / CCUG 14551 / JCM 1027 / KCTC 2358 / NCIMB 9240 / NCTC 8049).